The sequence spans 350 residues: MRVTNRSLRGREGEIAITAETLDDLWHLKYIIEKGDLVFALTKRKADSASDKLRPEKVEKVKVRLGIRVEEMEFHKFANRLRIHGPIEHGMDVGSYHTLNVEIGTNISIIKERWKNDQLQRIQDAEEAGKRPKVVIVAVEEGDADIGFVRHYGIEVYSHIRQSSGKRENGLRSEFFREIVDQLRHAVPEDASIVIAGPGFTKEDFLKYFHETEPEMASKALTEDTSMIGMSGFQEVLRRGAVDRIMQESRIARESSLMEDLLREISMDGKAAYGFADVKNALKYGAVETLLIADETLREGREKGEDIDKVLMEVEQAQGKVVVFSTAFEPGEKLHKLGGVAALLRFKVTG.

It belongs to the eukaryotic release factor 1 family. Pelota subfamily. As to quaternary structure, monomer. Requires a divalent metal cation as cofactor.

The protein resides in the cytoplasm. In terms of biological role, may function in recognizing stalled ribosomes, interact with stem-loop structures in stalled mRNA molecules, and effect endonucleolytic cleavage of the mRNA. May play a role in the release non-functional ribosomes and degradation of damaged mRNAs. Has endoribonuclease activity. The polypeptide is Protein pelota homolog (Methanosarcina acetivorans (strain ATCC 35395 / DSM 2834 / JCM 12185 / C2A)).